An 848-amino-acid chain; its full sequence is Protein SEY1 (848 aa).

The Cytoplasmic portion of the chain corresponds to 1–733; that stretch reads MNGNFAAVGS…KRGALGGMTQ (733 aa). The region spanning 47–277 is the GB1/RHD3-type G domain; it reads GFNYHLISVF…FVGGVFLPEY (231 aa). 57–64 contacts GTP; it reads GSQSTGKS. A helical transmembrane segment spans residues 734–754; it reads VPLYFWIALFAFGWNEIWMVI. The Lumenal segment spans residues 755-757; sequence RNP. The chain crosses the membrane as a helical span at residues 758–778; the sequence is FLFILLLLSAGGTYVAYNLSL. The Cytoplasmic portion of the chain corresponds to 779-848; that stretch reads LGPMMQMTNA…KKKDYDDDGI (70 aa). A disordered region spans residues 815-848; it reads LAMPASSKSSGGEQVRMDTLDSKGKKKDYDDDGI. Positions 829 to 848 are enriched in basic and acidic residues; that stretch reads VRMDTLDSKGKKKDYDDDGI.

Belongs to the TRAFAC class dynamin-like GTPase superfamily. GB1/RHD3 GTPase family. RHD3 subfamily.

The protein resides in the endoplasmic reticulum membrane. In terms of biological role, cooperates with the reticulon proteins and tubule-shaping DP1 family proteins to generate and maintain the structure of the tubular endoplasmic reticulum network. Has GTPase activity, which is required for its function in ER organization. This Pyricularia oryzae (strain 70-15 / ATCC MYA-4617 / FGSC 8958) (Rice blast fungus) protein is Protein SEY1.